The sequence spans 279 residues: uncharacterized protein (279 aa).

It belongs to the PhzF family.

This is an uncharacterized protein from Vibrio cholerae serotype O1 (strain ATCC 39315 / El Tor Inaba N16961).